The primary structure comprises 485 residues: Glycogen synthase (485 aa).

ADP-alpha-D-glucose is bound at residue K15.

The protein belongs to the glycosyltransferase 1 family. Bacterial/plant glycogen synthase subfamily.

It catalyses the reaction [(1-&gt;4)-alpha-D-glucosyl](n) + ADP-alpha-D-glucose = [(1-&gt;4)-alpha-D-glucosyl](n+1) + ADP + H(+). It functions in the pathway glycan biosynthesis; glycogen biosynthesis. Its function is as follows. Synthesizes alpha-1,4-glucan chains using ADP-glucose. This Francisella philomiragia subsp. philomiragia (strain ATCC 25017 / CCUG 19701 / FSC 153 / O#319-036) protein is Glycogen synthase.